A 147-amino-acid chain; its full sequence is Arginine repressor (147 aa).

The protein belongs to the ArgR family.

The protein localises to the cytoplasm. The protein operates within amino-acid biosynthesis; L-arginine biosynthesis [regulation]. Regulates arginine biosynthesis genes. The sequence is that of Arginine repressor from Chlamydia felis (strain Fe/C-56) (Chlamydophila felis).